The chain runs to 485 residues: Cysteine--tRNA ligase (485 aa).

C28 contributes to the Zn(2+) binding site. A 'HIGH' region motif is present at residues 30–40; that stretch reads MTVYDYCHLGH. Residues C212, H237, and E241 each coordinate Zn(2+). A 'KMSKS' region motif is present at residues 269 to 273; that stretch reads KMSKS. K272 contacts ATP.

The protein belongs to the class-I aminoacyl-tRNA synthetase family. In terms of assembly, monomer. Requires Zn(2+) as cofactor.

It localises to the cytoplasm. The enzyme catalyses tRNA(Cys) + L-cysteine + ATP = L-cysteinyl-tRNA(Cys) + AMP + diphosphate. This Bordetella bronchiseptica (strain ATCC BAA-588 / NCTC 13252 / RB50) (Alcaligenes bronchisepticus) protein is Cysteine--tRNA ligase.